A 495-amino-acid chain; its full sequence is Glucose-6-phosphate 1-dehydrogenase (495 aa).

Residue Lys-51 forms an Isoglutamyl lysine isopeptide (Lys-Gln) (interchain with Q-Cter in protein Pup) linkage. NADP(+) contacts are provided by residues 94–95 (DL) and Lys-154. Residues His-184, Lys-188, Glu-222, and Asp-241 each contribute to the substrate site. Residue His-246 is the Proton acceptor of the active site. Lys-345 contacts substrate.

It belongs to the glucose-6-phosphate dehydrogenase family.

It catalyses the reaction D-glucose 6-phosphate + NADP(+) = 6-phospho-D-glucono-1,5-lactone + NADPH + H(+). It functions in the pathway carbohydrate degradation; pentose phosphate pathway; D-ribulose 5-phosphate from D-glucose 6-phosphate (oxidative stage): step 1/3. In terms of biological role, catalyzes the oxidation of glucose 6-phosphate to 6-phosphogluconolactone. The polypeptide is Glucose-6-phosphate 1-dehydrogenase (Mycolicibacterium smegmatis (strain ATCC 700084 / mc(2)155) (Mycobacterium smegmatis)).